Reading from the N-terminus, the 345-residue chain is Cytoplasmic envelopment protein 2 (345 aa).

Residues 26-35 (KLVGKSRKHR) are nuclear localization signal 1. The nuclear export signal stretch occupies residues 55-63 (CILCQLLLL). The nuclear localization signal 2 stretch occupies residues 90 to 94 (RRRRR).

This sequence belongs to the herpesviridae cytoplasmic envelopment protein 2 family. Interacts with cytoplasmic envelopment protein 3 and with the capsid. Interacts with host STING1; this interaction prevents viral DNA-triggered antiviral immune response.

The protein localises to the virion tegument. It is found in the host cytoplasm. Its subcellular location is the host nucleus. Functionally, plays a critical role in cytoplasmic virus egress. Participates in the final step of tegumentation and envelope acquisition within the host cytoplasm by directly interacting with the capsid. Upon virion binding to target cell, a signaling cascade is triggered to disrupt the interaction with the capsid, thereby preparing capsid uncoating. Additionally, antagonizes the viral DNA-triggered antiviral immune response by targeting host STING1 and preventing its dimerization and trafficking. This Human cytomegalovirus (strain AD169) (HHV-5) protein is Cytoplasmic envelopment protein 2 (UL94).